A 125-amino-acid chain; its full sequence is Holo-[acyl-carrier-protein] synthase (125 aa).

Mg(2+) is bound by residues Asp8 and Glu57.

It belongs to the P-Pant transferase superfamily. AcpS family. Mg(2+) serves as cofactor.

It localises to the cytoplasm. It catalyses the reaction apo-[ACP] + CoA = holo-[ACP] + adenosine 3',5'-bisphosphate + H(+). Its function is as follows. Transfers the 4'-phosphopantetheine moiety from coenzyme A to a Ser of acyl-carrier-protein. This is Holo-[acyl-carrier-protein] synthase from Koribacter versatilis (strain Ellin345).